Consider the following 182-residue polypeptide: Putative manganese efflux pump MntP (182 aa).

Transmembrane regions (helical) follow at residues 6-26 (LIPL…VSLG), 37-57 (ILYI…IGMV), 71-91 (HFAG…STIL), 101-121 (IGIS…SVGL), 131-151 (IITI…GLLI), and 162-182 (YGEI…LFPI).

This sequence belongs to the MntP (TC 9.B.29) family.

The protein resides in the cell membrane. Probably functions as a manganese efflux pump. This Bacillus cereus (strain B4264) protein is Putative manganese efflux pump MntP.